The sequence spans 242 residues: Type III pantothenate kinase (242 aa).

7 to 14 (DNSNTRTK) is a binding site for ATP. Substrate is bound by residues tyrosine 88 and 95–98 (GADR). Aspartate 97 acts as the Proton acceptor in catalysis. A K(+)-binding site is contributed by aspartate 117. Residue threonine 120 participates in ATP binding. A substrate-binding site is contributed by threonine 172.

This sequence belongs to the type III pantothenate kinase family. In terms of assembly, homodimer. The cofactor is NH4(+). K(+) is required as a cofactor.

The protein resides in the cytoplasm. The catalysed reaction is (R)-pantothenate + ATP = (R)-4'-phosphopantothenate + ADP + H(+). The protein operates within cofactor biosynthesis; coenzyme A biosynthesis; CoA from (R)-pantothenate: step 1/5. Catalyzes the phosphorylation of pantothenate (Pan), the first step in CoA biosynthesis. The sequence is that of Type III pantothenate kinase from Akkermansia muciniphila (strain ATCC BAA-835 / DSM 22959 / JCM 33894 / BCRC 81048 / CCUG 64013 / CIP 107961 / Muc).